The primary structure comprises 311 residues: MKLRIGTRRSQLALDQTNWVVEQLKTHYPDIEIEIKKIETKGDQLLNVSLSKVGGKGLFLKEIQNALLQGEIDLAVHSMKDIPTETTEDLEICAITKRVDPLDALISNNDITIDELPENAKIGTSSLRRGSQLKAYRNDLQIIPIRGNINTRMNKLQELPELDAVVLAKAGLVRSGMTDSISQNISPEIIVPCPGQGALGLEIRHDNENLKEKLAVLDDSESRKAIGAERAFLNRLGGSCHVPVGAYAEIISNELHLTGVVASEDGQDVIKRSVQTHLSDNNKIPSTLGNDLAEELIELGANKILSELKEG.

C240 bears the S-(dipyrrolylmethanemethyl)cysteine mark.

The protein belongs to the HMBS family. As to quaternary structure, monomer. Dipyrromethane is required as a cofactor.

It carries out the reaction 4 porphobilinogen + H2O = hydroxymethylbilane + 4 NH4(+). It participates in porphyrin-containing compound metabolism; protoporphyrin-IX biosynthesis; coproporphyrinogen-III from 5-aminolevulinate: step 2/4. Tetrapolymerization of the monopyrrole PBG into the hydroxymethylbilane pre-uroporphyrinogen in several discrete steps. The protein is Porphobilinogen deaminase of Natranaerobius thermophilus (strain ATCC BAA-1301 / DSM 18059 / JW/NM-WN-LF).